Here is a 150-residue protein sequence, read N- to C-terminus: Large ribosomal subunit protein bL9 (150 aa).

This sequence belongs to the bacterial ribosomal protein bL9 family.

Its function is as follows. Binds to the 23S rRNA. In Corynebacterium kroppenstedtii (strain DSM 44385 / JCM 11950 / CIP 105744 / CCUG 35717), this protein is Large ribosomal subunit protein bL9.